The chain runs to 132 residues: Small ribosomal subunit protein uS11 (132 aa).

The tract at residues 1–24 is disordered; sequence MAAPKQAARKPRRRDRKSVPVGQA. Basic residues predominate over residues 7-16; the sequence is AARKPRRRDR.

This sequence belongs to the universal ribosomal protein uS11 family. As to quaternary structure, part of the 30S ribosomal subunit. Interacts with proteins S7 and S18. Binds to IF-3.

Located on the platform of the 30S subunit, it bridges several disparate RNA helices of the 16S rRNA. Forms part of the Shine-Dalgarno cleft in the 70S ribosome. The protein is Small ribosomal subunit protein uS11 of Bifidobacterium longum (strain DJO10A).